The sequence spans 288 residues: ATP synthase gamma chain (288 aa).

This sequence belongs to the ATPase gamma chain family. As to quaternary structure, F-type ATPases have 2 components, CF(1) - the catalytic core - and CF(0) - the membrane proton channel. CF(1) has five subunits: alpha(3), beta(3), gamma(1), delta(1), epsilon(1). CF(0) has three main subunits: a, b and c.

It localises to the cell membrane. Functionally, produces ATP from ADP in the presence of a proton gradient across the membrane. The gamma chain is believed to be important in regulating ATPase activity and the flow of protons through the CF(0) complex. The chain is ATP synthase gamma chain from Staphylococcus aureus (strain bovine RF122 / ET3-1).